The following is a 376-amino-acid chain: Pregnancy-associated glycoprotein 2 (376 aa).

The N-terminal stretch at 1 to 15 is a signal peptide; it reads MKWLVLLGLVALSEC. N-linked (GlcNAc...) asparagine glycosylation is found at Asn-51 and Asn-71. Residues 68-373 form the Peptidase A1 domain; that stretch reads YVGNITIGTP…DRKNRRIGLA (306 aa). Asp-86 is an active-site residue. Cys-99 and Cys-104 are disulfide-bonded. N-linked (GlcNAc...) asparagine glycans are attached at residues Asn-114, Asn-248, and Asn-252. Cys-258 and Cys-262 are disulfide-bonded. The active site involves Asp-267. An intrachain disulfide couples Cys-300 to Cys-333. An N-linked (GlcNAc...) asparagine glycan is attached at Asn-343.

This sequence belongs to the peptidase A1 family. Post-translationally, N-Glycosylated; the glycans terminate in either N-acetyl-galactosamine (GalNAc) or N-acetyllactosamine. Terminal GalNAc on Asn-linked glycans is greatly reduced prior to parturition while lactosamine-type N-glycans remain unaltered. In terms of tissue distribution, trophoblast and placental tissue. Localized to both the mononucleate and binucleate cells of the trophectoderm.

The protein localises to the secreted. The protein resides in the extracellular space. Functionally, PAG2 or a processed derivative of this molecule might represent a factor that binds the LH receptor. In Bos taurus (Bovine), this protein is Pregnancy-associated glycoprotein 2 (PAG2).